The sequence spans 941 residues: Ankyrin repeat and MYND domain-containing protein 1 (941 aa).

MORN repeat units lie at residues 2–24 (YQGE…TGES), 25–47 (YHGQ…DGSS), and 70–92 (FQGL…DGSQ). ANK repeat units lie at residues 292 to 321 (KGYT…DVNK), 513 to 542 (MRRM…DPNL), 545 to 574 (VPMQ…RTDI), 581 to 613 (STLT…DVDA), 657 to 691 (GGRT…NPNL), 694 to 723 (SGHS…DPNL), and 737 to 766 (CDLT…DILK). 8 residues coordinate Zn(2+): Cys-880, Cys-883, Cys-894, Cys-897, Cys-903, Cys-907, His-916, and Cys-920. An MYND-type zinc finger spans residues 880–920 (CYQCGRSIGVRLLPCPRCYGILTCSKYCKTKAWTEFHKKDC).

The protein is Ankyrin repeat and MYND domain-containing protein 1 (ANKMY1) of Homo sapiens (Human).